A 300-amino-acid polypeptide reads, in one-letter code: UPF0761 membrane protein Patl_3954 (300 aa).

6 helical membrane-spanning segments follow: residues Leu-46–Phe-66, Met-103–Asp-123, Ile-138–Leu-158, Met-184–Val-204, Ala-214–Phe-234, and Ala-248–Leu-268.

It belongs to the UPF0761 family.

It localises to the cell inner membrane. The sequence is that of UPF0761 membrane protein Patl_3954 from Pseudoalteromonas atlantica (strain T6c / ATCC BAA-1087).